A 593-amino-acid polypeptide reads, in one-letter code: MDDNLSGEEEDYYYSSDQESLNGIDNDESVSIPVSSRSNTVKVITKESLLAAQREDLRRVMELLSVKEHHARTLLIHYRWDVEKLFAVLVEKGKDSLFSGAGVTLLENQSCDSSVSGSSSMMSCDICVEDVPGYQLTRMDCGHSFCNNCWTGHFTVKINEGQSKRIICMAHKCNAICDEDVVRALVSKSQPDLAEKFDRFLLESYIEDNKMVKWCPSTPHCGNAIRVEDDELCEVECSCGLQFCFSCSSQAHSPCSCVMWELWRKKCFDESETVNWITVHTKPCPKCHKPVEKNGGCNLVTCLCRQSFCWLCGEATGRDHTWARISGHSCGRFQEDKEKQMERAKRDLKRYMHYHNRYKAHIDSSKLEAKLSNNISKKVSISEKRELQLKDFSWATNGLHRLFRSRRVLSYSYPFAFYMFGDELFKDEMSSEEREIKQNLFEDQQQQLEANVEKLSKFLEEPFDQFADDKVMQIRIQVINLSVAVDTLCENMYECIENDLLGSLQLGIHNITPYRSNGIERASDFYSSQNSKEAVGQSSDCGWTSRLDQALESGKSEDTSCSSGKRARIDESYRNSQTTLLDLNLPAEAIERK.

Residues 120-334 (SMMSCDICVE…ISGHSCGRFQ (215 aa)) form a TRIAD supradomain region. Zn(2+) is bound by residues cysteine 124, cysteine 127, cysteine 141, histidine 143, cysteine 146, cysteine 149, cysteine 168, cysteine 173, cysteine 215, cysteine 221, cysteine 237, cysteine 239, cysteine 244, cysteine 247, histidine 252, cysteine 257, cysteine 284, and cysteine 287. The segment at 124 to 173 (CDICVEDVPGYQLTRMDCGHSFCNNCWTGHFTVKINEGQSKRIICMAHKC) adopts an RING-type 1 zinc-finger fold. Residues 195-257 (EKFDRFLLES…SSQAHSPCSC (63 aa)) form an IBR-type zinc finger. An RING-type 2; atypical zinc finger spans residues 284-312 (CPKCHKPVEKNGGCNLVTCLCRQSFCWLC). The active site involves cysteine 297. Residues cysteine 302, cysteine 304, cysteine 309, cysteine 312, histidine 320, and cysteine 330 each contribute to the Zn(2+) site.

This sequence belongs to the RBR family. Ariadne subfamily. The cofactor is Zn(2+). As to expression, ubiquitous.

It carries out the reaction [E2 ubiquitin-conjugating enzyme]-S-ubiquitinyl-L-cysteine + [acceptor protein]-L-lysine = [E2 ubiquitin-conjugating enzyme]-L-cysteine + [acceptor protein]-N(6)-ubiquitinyl-L-lysine.. The protein operates within protein modification; protein ubiquitination. Its function is as follows. Might act as an E3 ubiquitin-protein ligase, or as part of E3 complex, which accepts ubiquitin from specific E2 ubiquitin-conjugating enzymes and then transfers it to substrates. The protein is Probable E3 ubiquitin-protein ligase ARI2 (ARI2) of Arabidopsis thaliana (Mouse-ear cress).